The sequence spans 301 residues: Probable alpha-L-glutamate ligase 1 (301 aa).

The 184-residue stretch at 104 to 287 folds into the ATP-grasp domain; the sequence is LQLLSRKGIG…VTEPIVEYIE (184 aa). ATP is bound by residues Lys141, 178 to 179, Asp187, and 211 to 213; these read EY and RSN. Mg(2+) contacts are provided by Asp248, Glu260, and Asn262. Residues Asp248, Glu260, and Asn262 each coordinate Mn(2+).

Belongs to the RimK family. It depends on Mg(2+) as a cofactor. Mn(2+) serves as cofactor.

The polypeptide is Probable alpha-L-glutamate ligase 1 (Shewanella baltica (strain OS155 / ATCC BAA-1091)).